Here is a 179-residue protein sequence, read N- to C-terminus: ATP synthase subunit delta (179 aa).

It belongs to the ATPase delta chain family. As to quaternary structure, F-type ATPases have 2 components, F(1) - the catalytic core - and F(0) - the membrane proton channel. F(1) has five subunits: alpha(3), beta(3), gamma(1), delta(1), epsilon(1). F(0) has three main subunits: a(1), b(2) and c(10-14). The alpha and beta chains form an alternating ring which encloses part of the gamma chain. F(1) is attached to F(0) by a central stalk formed by the gamma and epsilon chains, while a peripheral stalk is formed by the delta and b chains.

Its subcellular location is the cell membrane. In terms of biological role, f(1)F(0) ATP synthase produces ATP from ADP in the presence of a proton or sodium gradient. F-type ATPases consist of two structural domains, F(1) containing the extramembraneous catalytic core and F(0) containing the membrane proton channel, linked together by a central stalk and a peripheral stalk. During catalysis, ATP synthesis in the catalytic domain of F(1) is coupled via a rotary mechanism of the central stalk subunits to proton translocation. Functionally, this protein is part of the stalk that links CF(0) to CF(1). It either transmits conformational changes from CF(0) to CF(1) or is implicated in proton conduction. The polypeptide is ATP synthase subunit delta (Listeria monocytogenes serovar 1/2a (strain ATCC BAA-679 / EGD-e)).